Here is a 274-residue protein sequence, read N- to C-terminus: ATP synthase subunit delta (274 aa).

The protein belongs to the ATPase delta chain family. As to quaternary structure, F-type ATPases have 2 components, F(1) - the catalytic core - and F(0) - the membrane proton channel. F(1) has five subunits: alpha(3), beta(3), gamma(1), delta(1), epsilon(1). F(0) has three main subunits: a(1), b(2) and c(10-14). The alpha and beta chains form an alternating ring which encloses part of the gamma chain. F(1) is attached to F(0) by a central stalk formed by the gamma and epsilon chains, while a peripheral stalk is formed by the delta and b chains.

The protein resides in the cell membrane. In terms of biological role, f(1)F(0) ATP synthase produces ATP from ADP in the presence of a proton or sodium gradient. F-type ATPases consist of two structural domains, F(1) containing the extramembraneous catalytic core and F(0) containing the membrane proton channel, linked together by a central stalk and a peripheral stalk. During catalysis, ATP synthesis in the catalytic domain of F(1) is coupled via a rotary mechanism of the central stalk subunits to proton translocation. This protein is part of the stalk that links CF(0) to CF(1). It either transmits conformational changes from CF(0) to CF(1) or is implicated in proton conduction. The polypeptide is ATP synthase subunit delta (Acidothermus cellulolyticus (strain ATCC 43068 / DSM 8971 / 11B)).